The primary structure comprises 356 residues: L-lactate dehydrogenase A (356 aa).

Residues 75-80 and arginine 121 each bind NAD(+); that span reads DALPDK. 3 residues coordinate substrate: arginine 128, asparagine 160, and arginine 191. Asparagine 160 provides a ligand contact to NAD(+). The active-site Proton acceptor is histidine 215. Residue threonine 270 participates in substrate binding.

It belongs to the LDH/MDH superfamily. LDH family. Tetramer that arise from random association of LDH-A and LDH-B.

It catalyses the reaction (S)-lactate + NAD(+) = pyruvate + NADH + H(+). The protein operates within fermentation; pyruvate fermentation to lactate; (S)-lactate from pyruvate: step 1/1. This chain is L-lactate dehydrogenase A, found in Hordeum vulgare (Barley).